Reading from the N-terminus, the 902-residue chain is Respiratory burst oxidase homolog protein A (902 aa).

The Cytoplasmic segment spans residues 1 to 344; the sequence is MMNRSEMQKL…KYFLFDNWKR (344 aa). 2 disordered regions span residues 63 to 87 and 107 to 130; these read KSPN…RSGR and ASSV…RRSK. Over residues 74 to 87 the composition is skewed to polar residues; the sequence is YEDQSLLRQGRSGR. Positions 107-116 are enriched in low complexity; that stretch reads ASSVSSSSAR. 2 EF-hand-like regions span residues 163 to 173 and 198 to 209; these read TMTTNGLLHRS and ENVSGDSININE. 2 consecutive EF-hand domains span residues 221–256 and 265–300; these read DFDS…SASA and QADE…APMQ. Ca(2+) is bound by residues Asp234, Asp236, Asp238, Arg240, and Glu245. Ser311 and Ser315 each carry phosphoserine. A helical membrane pass occupies residues 345–365; sequence VWVMALWIGAMAGLFTWKFME. Residues 366 to 380 are Extracellular-facing; that stretch reads YRKRSAYEVMGVCVC. A helical membrane pass occupies residues 381 to 401; the sequence is IAKGAAETLKLNMAMILLPVC. The region spanning 383–540 is the Ferric oxidoreductase domain; that stretch reads KGAAETLKLN…LFVIVYSLLV (158 aa). Residues 402–428 are Cytoplasmic-facing; sequence RNTITWLRTKTKLSAIVPFDDSLNFHK. A helical membrane pass occupies residues 429–449; the sequence is VIAIGISVGVGIHATSHLACD. Residues 450 to 484 lie on the Extracellular side of the membrane; sequence FPRLIAADEDQYEPMEKYFGPQTKRYLDFVQSVEG. Residues 485-505 form a helical membrane-spanning segment; the sequence is VTGIGMVVLMTIAFTLATTWF. The Cytoplasmic portion of the chain corresponds to 506 to 529; that stretch reads RRNKLNLPGPLKKITGFNAFWYSH. A helical transmembrane segment spans residues 530-550; that stretch reads HLFVIVYSLLVVHGFYVYLII. At 551 to 709 the chain is on the extracellular side; sequence EPWYKKTTWM…PAQDYKKFEV (159 aa). The region spanning 575-703 is the FAD-binding FR-type domain; sequence IRAFRSSVEA…DGPYGAPAQD (129 aa). The chain crosses the membrane as a helical span at residues 710-730; sequence VLLVGLGIGATPMISIVSDII. Over 731–902 the chain is Cytoplasmic; it reads NNLKGVEEGS…TKFIFHKENF (172 aa). Residues 738–760 form a disordered region; that stretch reads EGSNRRQSPIHNMVTPPVSPSRK.

It belongs to the RBOH (TC 5.B.1.3) family. As to quaternary structure, monomer and homodimer.

Its subcellular location is the membrane. Its function is as follows. Calcium-dependent NADPH oxidase that generates superoxide. The sequence is that of Respiratory burst oxidase homolog protein A (RBOHA) from Arabidopsis thaliana (Mouse-ear cress).